A 599-amino-acid chain; its full sequence is Laccase-2 (599 aa).

An N-terminal signal peptide occupies residues 1 to 19 (MARSTTSLFALSLVASAFA). 2 consecutive Plastocyanin-like domains span residues 21–145 (VVDY…IVIY) and 157–307 (VDDE…LVYE). The Cu cation site is built by histidine 82, histidine 84, histidine 127, and histidine 129. A disulfide bridge connects residues cysteine 103 and cysteine 588. Residues asparagine 207, asparagine 208, asparagine 231, asparagine 397, and asparagine 443 are each glycosylated (N-linked (GlcNAc...) asparagine). Residues 450–567 (DVPTLLKILT…EGFAMVFAEA (118 aa)) form the Plastocyanin-like 3 domain. Positions 497, 500, 502, 549, 550, 551, and 555 each coordinate Cu cation.

Belongs to the multicopper oxidase family. Homodimer. The cofactor is Cu cation. As to expression, in mycelia, at a lower level than LCC4.

The protein resides in the secreted. The enzyme catalyses 4 hydroquinone + O2 = 4 benzosemiquinone + 2 H2O. Functionally, lignin degradation and detoxification of lignin-derived products. The protein is Laccase-2 (LCC2) of Thanatephorus cucumeris (Black scurf of potato).